The following is a 472-amino-acid chain: MPAIKKRKIAREAPQQEDHSDSEAHSSASEDAAPNTTEQEQEPSEAPKQAPKSFKELGLIEQLCEACDSMGYKAPTAIQAEAIPLALQGRDLIGLAETGSGKTAAFALPILQALMDKPSSFFGLVLAPTRELAYQISQAFEGLGSTISVRSTVLVGGMDMVSQSIALGKKPHIIVATPGRLLDHLENTKGFSLRNLKYLVMDEADRLLDMDFGPILDKILKVLPRERRTYLFSATMSSKVESLQRASLQNPLRVAVSSSKFQTVSTLQQSYIFIPHKHKDLYLVYLLNEFVGQSCIIFCRTVHETQRLSFFLRLLGFGAIPLHGQLSQSARLGALGKFRSRSRDILVATDVAARGLDIPSVDVVLNFDLPGDSKTFIHRIGRTARAGKSGVAISFATQYDVEAWLRIEGALGKKLPEYPAEKDEVMVLAERVSEAQRSAILEMKNYDEKKGSRGKKFAKGKRSREDMDQEEG.

A disordered region spans residues 1 to 52; that stretch reads MPAIKKRKIAREAPQQEDHSDSEAHSSASEDAAPNTTEQEQEPSEAPKQAPK. The span at 10–24 shows a compositional bias: basic and acidic residues; it reads AREAPQQEDHSDSEA. Residues 52–80 carry the Q motif motif; the sequence is KSFKELGLIEQLCEACDSMGYKAPTAIQA. The Helicase ATP-binding domain maps to 83–254; it reads IPLALQGRDL…RASLQNPLRV (172 aa). 96–103 lines the ATP pocket; sequence AETGSGKT. The DEAD box signature appears at 202 to 205; the sequence is DEAD. The 145-residue stretch at 282-426 folds into the Helicase C-terminal domain; the sequence is YLVYLLNEFV…EYPAEKDEVM (145 aa). Positions 443 to 472 are disordered; that stretch reads MKNYDEKKGSRGKKFAKGKRSREDMDQEEG. Positions 452-462 are enriched in basic residues; it reads SRGKKFAKGKR.

This sequence belongs to the DEAD box helicase family. DDX47/RRP3 subfamily. As to quaternary structure, interacts with the SSU processome.

It is found in the nucleus. It catalyses the reaction ATP + H2O = ADP + phosphate + H(+). Functionally, ATP-dependent rRNA helicase required for pre-ribosomal RNA processing. Involved in the maturation of the 35S-pre-rRNA and to its cleavage to mature 18S rRNA. The sequence is that of ATP-dependent rRNA helicase rrp3 from Aspergillus oryzae (strain ATCC 42149 / RIB 40) (Yellow koji mold).